The chain runs to 254 residues: Agamous-like MADS-box protein AGL9 homolog (254 aa).

An MADS-box domain is found at 3–57 (RGRVELKRIENKINRQVTFAKRRNGLLKKAYELSVLCDAEVALIIFSNRGKLYEF). The 91-residue stretch at 91-181 (ELSSQQEYLK…RLRLADGYQM (91 aa)) folds into the K-box domain.

The protein resides in the nucleus. Functionally, probable transcription factor active in inflorescence development and floral organogenesis. This is Agamous-like MADS-box protein AGL9 homolog (AGL9) from Sinapis alba (White mustard).